Consider the following 201-residue polypeptide: MLLPWLNEELIEAGCDEAGRGCLAGAVYAAAVILPKDFENELLNDSKQLSEKQRYALREVIERDAVAWAVGIVSPEEIDKINILNASFLAMHRAVDRLKTRPQHLLIDGNRFKKYPDIPHTTVIKGDGKYLSIAAASILAKTYRDDYMNKLHQEFPCYDWEHNKGYPTKKHRAAIAGHGTTPYHRMTFNLLGDGQLELFSK.

In terms of domain architecture, RNase H type-2 spans 10 to 200 (LIEAGCDEAG…LGDGQLELFS (191 aa)). 3 residues coordinate a divalent metal cation: Asp16, Glu17, and Asp108.

It belongs to the RNase HII family. It depends on Mn(2+) as a cofactor. Mg(2+) serves as cofactor.

The protein localises to the cytoplasm. It catalyses the reaction Endonucleolytic cleavage to 5'-phosphomonoester.. Endonuclease that specifically degrades the RNA of RNA-DNA hybrids. This chain is Ribonuclease HII, found in Bacteroides fragilis (strain ATCC 25285 / DSM 2151 / CCUG 4856 / JCM 11019 / LMG 10263 / NCTC 9343 / Onslow / VPI 2553 / EN-2).